We begin with the raw amino-acid sequence, 327 residues long: Protoheme IX farnesyltransferase (327 aa).

7 consecutive transmembrane segments (helical) span residues 55–75, 101–121, 124–144, 152–172, 180–200, 237–257, and 278–298; these read LVCT…LNCL, AAFV…VSGV, LAAG…TALL, IVVG…AATG, WLFA…ALLL, FLGI…ILPF, and AKGL…LLVM.

Belongs to the UbiA prenyltransferase family. Protoheme IX farnesyltransferase subfamily.

The protein localises to the cell inner membrane. It catalyses the reaction heme b + (2E,6E)-farnesyl diphosphate + H2O = Fe(II)-heme o + diphosphate. The protein operates within porphyrin-containing compound metabolism; heme O biosynthesis; heme O from protoheme: step 1/1. In terms of biological role, converts heme B (protoheme IX) to heme O by substitution of the vinyl group on carbon 2 of heme B porphyrin ring with a hydroxyethyl farnesyl side group. The sequence is that of Protoheme IX farnesyltransferase from Synechococcus sp. (strain CC9311).